We begin with the raw amino-acid sequence, 798 residues long: PR domain zinc finger protein 4 (798 aa).

Residues 408–525 enclose the SET domain; the sequence is KQLVLRQSIV…PENELLFYYS (118 aa). C2H2-type zinc fingers lie at residues 586-608, 614-636, 642-664, 670-692, and 698-720; these read WKCSMCPQAFISPSKLHVHFMGH, HKCDFCSKAFSDPSNLRTHLKIH, YRCTLCDKSFTQKAHLESHMVIH, LKCDYCDKLFMRRQDLKQHVLIH, and IKCPKCDKLFLRTNHLKKHLNSH. The segment at 726-747 adopts a C2H2-type 6; degenerate zinc-finger fold; the sequence is YVCEKCTKAYLTKYHLTRHLKA. The interval 750 to 798 is disordered; sequence EPASSSSAQDDEDEDGDSGEDGLPGSMTTEGCRMSSAVYSADESLSAHK. Residues 758 to 769 show a composition bias toward acidic residues; it reads QDDEDEDGDSGE.

The protein belongs to the class V-like SAM-binding methyltransferase superfamily.

It localises to the nucleus. Functionally, may function as a transcription factor involved in cell differentiation. The sequence is that of PR domain zinc finger protein 4 (Prdm4) from Rattus norvegicus (Rat).